The chain runs to 311 residues: Dermonecrotic toxin LlSicTox-alphaIII1i (311 aa).

Positions 1 to 21 (MYAHLALILGCWTVVLQGAET) are cleaved as a signal peptide. The propeptide occupies 22–26 (DVGER). Residue His-38 is part of the active site. 2 residues coordinate Mg(2+): Glu-58 and Asp-60. Residue His-73 is the Nucleophile of the active site. The cysteines at positions 77 and 83 are disulfide-linked. Asp-117 contributes to the Mg(2+) binding site.

It belongs to the arthropod phospholipase D family. Class I subfamily. Mg(2+) serves as cofactor. In terms of tissue distribution, expressed by the venom gland.

The protein localises to the secreted. It catalyses the reaction an N-(acyl)-sphingosylphosphocholine = an N-(acyl)-sphingosyl-1,3-cyclic phosphate + choline. The enzyme catalyses an N-(acyl)-sphingosylphosphoethanolamine = an N-(acyl)-sphingosyl-1,3-cyclic phosphate + ethanolamine. It carries out the reaction a 1-acyl-sn-glycero-3-phosphocholine = a 1-acyl-sn-glycero-2,3-cyclic phosphate + choline. The catalysed reaction is a 1-acyl-sn-glycero-3-phosphoethanolamine = a 1-acyl-sn-glycero-2,3-cyclic phosphate + ethanolamine. Functionally, dermonecrotic toxins cleave the phosphodiester linkage between the phosphate and headgroup of certain phospholipids (sphingolipid and lysolipid substrates), forming an alcohol (often choline) and a cyclic phosphate. This toxin acts on sphingomyelin (SM) with high activity. It also act on acyl- and alkyl-lysophosphatidylcholine (LPC), but not on sphingosylphosphorylcholine (SPC) and phosphatidylcholine (PC). It may also act on ceramide phosphoethanolamine (CPE), and lysophosphatidylethanolamine (LPE), but not on lysophosphatidylserine (LPS), and lysophosphatidylglycerol (LPG). It acts by transphosphatidylation, releasing exclusively cyclic phosphate products as second products. Induces complement-dependent hemolysis and dermonecrosis. Also induces increased vascular permeability, edema, inflammatory response, and platelet aggregation. The sequence is that of Dermonecrotic toxin LlSicTox-alphaIII1i from Loxosceles laeta (South American recluse spider).